Reading from the N-terminus, the 500-residue chain is LEM protein 2 (500 aa).

An LEM domain is found at 1–45 (MVDVEKMSDAELRAELNVRGANVGPVTGTTRSLYEKKLKKLLSGG). Topologically, residues 1–325 (MVDVEKMSDA…VKQTNIFNEA (325 aa)) are nuclear. The disordered stretch occupies residues 39-202 (KKLLSGGAKT…RRITSVPGLI (164 aa)). The span at 46–57 (AKTPARPTVAKP) shows a compositional bias: low complexity. Pro residues predominate over residues 58 to 75 (APKPTPKSAPAPKSPKSP). Low complexity predominate over residues 77–89 (ARRSIPRAAATAA). The span at 103-122 (EEMSDSDDDMRDDDDDDEEI) shows a compositional bias: acidic residues. Low complexity-rich tracts occupy residues 130-141 (SSFRSANSTASS) and 168-197 (NTPRTTSSSSKTTINTTTTRIPSTPRRITS). Residues 326 to 346 (IYFALYVILILFVVLGIAYAL) traverse the membrane as a helical segment. Topologically, residues 347-378 (TTTHRPKTADFSGYWGVLKAAGRDSLNFFYNY) are perinuclear space. Residues 379-399 (AILPVVSLGIFVVLGAGIYFG) traverse the membrane as a helical segment. Residues 400-500 (HRKYKEAKEQ…WIGNQSQKRW (101 aa)) lie on the Nuclear side of the membrane.

As to quaternary structure, interacts with lmn-1. Interacts (via LEM domain and the C-terminal nuclear domain) with baf-1. As to expression, ubiquitous. High expression in germline and intestine.

The protein resides in the nucleus inner membrane. It is found in the nucleus envelope. Its subcellular location is the chromosome. Its function is as follows. Nuclear lamina-associated inner nuclear membrane protein that is involved in cell division, nuclear structure organization, maintenance of nuclear envelope integrity and nuclear envelope reformation after mitosis. In interphase cells, plays a role in anchoring and spatial arrangement of chromosome arms at the nuclear periphery, forming so-called lem-2 subdomains. Both arms of autosomes but only the left arm of the X chromosome are anchored in lem-2 subdomains; sequences bound by lem-2 are mainly repetitive chromosome sequences and inactive genes. Involved in chromosome segregation and cell division, probably via its interaction with the nuclear intermediate filament protein lmn-1, the main component of nuclear lamina. Required to organize the distribution of lmn-1, nuclear pore complexes (NPCs) and chromatin in mitotically active cells. Involved in the nuclear positioning and efficient anchoring of microtubule-organizing centers (MTOCs) to the nuclear envelope during mitosis as well as on maintaining correct nuclear morphology. Contributes to closure of nuclear envelope (NE) holes and prevents excess nuclear membranes after meiosis and mitosis. Together with emr-1, plays a role in baf-1 enrichment at the nuclear envelope in anaphase. Together with emr-1, involved in muscle cell attachment to hypodermal cells, as well as muscle cell location and sarcomere organization. May play a role in radiation-induced DNA damage repair response. The polypeptide is LEM protein 2 (lem-2) (Caenorhabditis elegans).